We begin with the raw amino-acid sequence, 337 residues long: Anthranilate phosphoribosyltransferase (337 aa).

5-phospho-alpha-D-ribose 1-diphosphate contacts are provided by residues Gly81, 84–85 (GD), Ser89, 91–94 (NVST), 109–117 (KHGNRAATS), and Ala121. Gly81 is a binding site for anthranilate. Ser93 is a binding site for Mg(2+). Asn112 serves as a coordination point for anthranilate. Position 167 (Arg167) interacts with anthranilate. Asp226 and Glu227 together coordinate Mg(2+).

The protein belongs to the anthranilate phosphoribosyltransferase family. Homodimer. Mg(2+) serves as cofactor.

It catalyses the reaction N-(5-phospho-beta-D-ribosyl)anthranilate + diphosphate = 5-phospho-alpha-D-ribose 1-diphosphate + anthranilate. It functions in the pathway amino-acid biosynthesis; L-tryptophan biosynthesis; L-tryptophan from chorismate: step 2/5. Its function is as follows. Catalyzes the transfer of the phosphoribosyl group of 5-phosphorylribose-1-pyrophosphate (PRPP) to anthranilate to yield N-(5'-phosphoribosyl)-anthranilate (PRA). This chain is Anthranilate phosphoribosyltransferase, found in Methylorubrum populi (strain ATCC BAA-705 / NCIMB 13946 / BJ001) (Methylobacterium populi).